Reading from the N-terminus, the 659-residue chain is Putative oxidoreductase AegA (659 aa).

4Fe-4S ferredoxin-type domains follow at residues 3–22, 47–77, 78–107, 114–147, and 218–252; these read RFIM…EIAC, HQQQ…SHVD, DSIQ…IVLT, VKAT…LVTD, and DQAQ…WIEL. Residues C12, C15, C18, C22, C56, C59, C64, C68, C87, C90, C93, C97, C121, C124, C133, C137, C227, C230, C236, and C240 each coordinate [4Fe-4S] cluster.

It depends on [4Fe-4S] cluster as a cofactor.

In terms of biological role, involved in formate-dependent uric acid degradation under microaerobic and anaerobic conditions. May reduce the enzymes necessary for uric acid degradation. The polypeptide is Putative oxidoreductase AegA (Escherichia coli (strain K12)).